Here is a 60-residue protein sequence, read N- to C-terminus: Large ribosomal subunit protein bL32 (60 aa).

Basic residues predominate over residues 1–20 (MAVQKSRKSRSRRDMRRSHH). A disordered region spans residues 1–60 (MAVQKSRKSRSRRDMRRSHHHMEVAELSIDATTGEKHRRHHMTKDGFYRGRQLFKASQED).

This sequence belongs to the bacterial ribosomal protein bL32 family.

In Psychrobacter sp. (strain PRwf-1), this protein is Large ribosomal subunit protein bL32.